The sequence spans 256 residues: 1-(5-phosphoribosyl)-5-[(5-phosphoribosylamino)methylideneamino] imidazole-4-carboxamide isomerase (256 aa).

D8 (proton acceptor) is an active-site residue. The Proton donor role is filled by D129.

The protein belongs to the HisA/HisF family.

It localises to the cytoplasm. The enzyme catalyses 1-(5-phospho-beta-D-ribosyl)-5-[(5-phospho-beta-D-ribosylamino)methylideneamino]imidazole-4-carboxamide = 5-[(5-phospho-1-deoxy-D-ribulos-1-ylimino)methylamino]-1-(5-phospho-beta-D-ribosyl)imidazole-4-carboxamide. It functions in the pathway amino-acid biosynthesis; L-histidine biosynthesis; L-histidine from 5-phospho-alpha-D-ribose 1-diphosphate: step 4/9. This Prochlorococcus marinus (strain NATL1A) protein is 1-(5-phosphoribosyl)-5-[(5-phosphoribosylamino)methylideneamino] imidazole-4-carboxamide isomerase.